The primary structure comprises 251 residues: Zinc import ATP-binding protein ZnuC (251 aa).

The ABC transporter domain maps to 5–220 (VSLENVSVSF…PEFISMFGPR (216 aa)). 37–44 (GPNGAGKS) contributes to the ATP binding site.

The protein belongs to the ABC transporter superfamily. Zinc importer (TC 3.A.1.15.5) family. As to quaternary structure, the complex is composed of two ATP-binding proteins (ZnuC), two transmembrane proteins (ZnuB) and a solute-binding protein (ZnuA).

Its subcellular location is the cell inner membrane. It carries out the reaction Zn(2+)(out) + ATP(in) + H2O(in) = Zn(2+)(in) + ADP(in) + phosphate(in) + H(+)(in). Its function is as follows. Part of the ABC transporter complex ZnuABC involved in zinc import. Responsible for energy coupling to the transport system. The sequence is that of Zinc import ATP-binding protein ZnuC from Shigella dysenteriae serotype 1 (strain Sd197).